We begin with the raw amino-acid sequence, 215 residues long: Thymidylate kinase (215 aa).

An ATP-binding site is contributed by 12–19 (GIDGAGKS).

The protein belongs to the thymidylate kinase family.

The enzyme catalyses dTMP + ATP = dTDP + ADP. Functionally, phosphorylation of dTMP to form dTDP in both de novo and salvage pathways of dTTP synthesis. The sequence is that of Thymidylate kinase from Albidiferax ferrireducens (strain ATCC BAA-621 / DSM 15236 / T118) (Rhodoferax ferrireducens).